Consider the following 335-residue polypeptide: Mycobacterial beta-ketoacyl-[acyl-carrier-protein] synthase III (335 aa).

Residues Cys-122 and His-258 contribute to the active site. The segment at 259-263 (QANSR) is ACP-binding. Residue Asn-289 is part of the active site.

It belongs to the thiolase-like superfamily. FabH family. Homodimer.

The protein resides in the cytoplasm. The catalysed reaction is malonyl-[ACP] + dodecanoyl-CoA + H(+) = 3-oxotetradecanoyl-[ACP] + CO2 + CoA. It functions in the pathway lipid metabolism; fatty acid biosynthesis. Its pathway is lipid metabolism; mycolic acid biosynthesis. Its function is as follows. Catalyzes the condensation reaction of fatty acid synthesis by the addition to an acyl acceptor of two carbons from malonyl-ACP. Catalyzes the first condensation reaction which initiates fatty acid synthesis and may therefore play a role in governing the total rate of fatty acid production. Possesses both acetoacetyl-ACP synthase and acetyl transacylase activities. Its substrate specificity determines the biosynthesis of branched-chain and/or straight-chain of fatty acids. This is Mycobacterial beta-ketoacyl-[acyl-carrier-protein] synthase III from Mycobacterium ulcerans (strain Agy99).